Here is a 772-residue protein sequence, read N- to C-terminus: Glucocorticoid receptor (772 aa).

Basic and acidic residues predominate over residues 1–15 (MDSKESLSPPGREEV). The segment at 1–22 (MDSKESLSPPGREEVPSSVLRP) is disordered. Residues 1–415 (MDSKESLSPP…TTAAGPPPKL (415 aa)) form a modulating region. Arg25 carries the omega-N-methylarginine modification. The segment at 39–82 (APVRVPASSPSLAPAAQPDSKQQRLAVDFPKGSASNAQQPDLSR) is disordered. Positions 44 to 58 (PASSPSLAPAAQPDS) are enriched in low complexity. Residues Ser47, Ser115, Ser136, and Ser143 each carry the phosphoserine modification. The tract at residues 132-186 (NRSASGADNPRSTAPAAGSAAPTEGFPKTHSDLASERQNPKGQTGGSAGSAKLHP) is disordered. Low complexity predominate over residues 143-156 (STAPAAGSAAPTEG). Basic and acidic residues predominate over residues 158-170 (PKTHSDLASERQN). Residues Ser203, Ser211, and Ser226 each carry the phosphoserine modification. A Glycyl lysine isopeptide (Lys-Gly) (interchain with G-Cter in SUMO2) cross-link involves residue Lys258. Glycyl lysine isopeptide (Lys-Gly) (interchain with G-Cter in SUMO); alternate cross-links involve residues Lys277 and Lys293. Residues Lys277 and Lys293 each participate in a glycyl lysine isopeptide (Lys-Gly) (interchain with G-Cter in SUMO2); alternate cross-link. Residues Ser307 and Ser400 each carry the phosphoserine modification. Residue Lys414 forms a Glycyl lysine isopeptide (Lys-Gly) (interchain with G-Cter in ubiquitin) linkage. NR C4-type zinc fingers lie at residues 416–436 (CLVCSDEASGCHYGVLTCGSC) and 452–476 (CAGRNDCIIDKIRRKNCPACRYRKC). The segment at residues 416 to 481 (CLVCSDEASG…RYRKCLQAGM (66 aa)) is a DNA-binding region (nuclear receptor). An N6-acetyllysine mark is found at Lys475, Lys487, Lys489, and Lys490. The interaction with CLOCK stretch occupies residues 480-772 (GMNLEARKTK…NIKKLLFHQK (293 aa)). The interval 482 to 518 (NLEARKTKKKIKGIQQTSTGVSQETSENPSNRTVVPA) is hinge. Residues 494–513 (GIQQTSTGVSQETSENPSNR) are disordered. Positions 499–513 (STGVSQETSENPSNR) are enriched in polar residues. The NR LBD domain occupies 519 to 753 (ALPQLTPTLV…FPEMLAEIIT (235 aa)). Residues 527–692 (LVSLLEVIEP…EIRMTYIKEL (166 aa)) are interaction with CRY1. Residue Lys698 forms a Glycyl lysine isopeptide (Lys-Gly) (interchain with G-Cter in SUMO) linkage.

This sequence belongs to the nuclear hormone receptor family. NR3 subfamily. As to quaternary structure, heteromultimeric cytoplasmic complex with HSP90AA1, HSPA1A/HSPA1B, and FKBP5 or another immunophilin such as PPID, STIP1, or the immunophilin homolog PPP5C. Upon ligand binding FKBP5 dissociates from the complex and FKBP4 takes its place, thereby linking the complex to dynein and mediating transport to the nucleus, where the complex dissociates. Probably forms a complex composed of chaperones HSP90 and HSP70, co-chaperones CDC37, PPP5C, TSC1 and client protein TSC2, CDK4, AKT, RAF1 and NR3C1; this complex does not contain co-chaperones STIP1/HOP and PTGES3/p23. Directly interacts with UNC45A. Binds to DNA as a homodimer, and as heterodimer with NR3C2 or the retinoid X receptor. Binds STAT5A and STAT5B homodimers and heterodimers. Interacts with NRIP1, POU2F1, POU2F2 and TRIM28. Interacts with several coactivator complexes, including the SMARCA4 complex, CREBBP/EP300, TADA2L (Ada complex) and p160 coactivators such as NCOA2 and NCOA6. Interaction with BAG1 inhibits transactivation. Interacts with HEXIM1 and TGFB1I1. Interacts with NCOA1. Interacts with NCOA3, SMARCA4, SMARCC1, SMARCD1, and SMARCE1. Interacts with CLOCK, CRY1 and CRY2 in a ligand-dependent fashion. Interacts with CIART. Interacts with RWDD3. Interacts with UBE2I/UBC9 and this interaction is enhanced in the presence of RWDD3. Interacts with GRIP1. Interacts with NR4A3 (via nuclear receptor DNA-binding domain), represses transcription activity of NR4A3 on the POMC promoter Nur response element (NurRE). Directly interacts with PNRC2 to attract and form a complex with UPF1 and DCP1A; the interaction leads to rapid mRNA degradation. Interacts with GSK3B. Interacts with FNIP1 and FNIP2. Interacts (via C-terminus) with HNRNPU (via C-terminus). Interacts with MCM3AP. Interacts (via domain NR LBD) with HSP90AA1 and HSP90AB1. In the absence of hormonal ligand, interacts with TACC1. Interacts (via NR LBD domain) with ZNF764 (via KRAB domain); the interaction regulates transcription factor activity of NR3C1 by directing its actions toward certain biologic pathways. In terms of processing, acetylation by CLOCK reduces its binding to glucocorticoid response elements and its transcriptional activity. Increased proteasome-mediated degradation in response to glucocorticoids. Post-translationally, phosphorylated in the absence of hormone; becomes hyperphosphorylated in the presence of glucocorticoid. The Ser-203, Ser-226 and Ser-399-phosphorylated forms are mainly cytoplasmic, and the Ser-211-phosphorylated form is nuclear. Phosphorylation at Ser-211 increases transcriptional activity. Phosphorylation at Ser-203, Ser-226 and Ser-399 decreases signaling capacity. Phosphorylation at Ser-399 may protect from glucocorticoid-induced apoptosis. Phosphorylation at Ser-203 and Ser-211 is not required in regulation of chromosome segregation. May be dephosphorylated by PPP5C, attenuates NR3C1 action. In terms of processing, ubiquitinated by UBR5, leading to its degradation: UBR5 specifically recognizes and binds ligand-bound NR3C1 when it is not associated with coactivators (NCOAs). In presence of NCOAs, the UBR5-degron is not accessible, preventing its ubiquitination and degradation. Sumoylation at Lys-277 and Lys-293 negatively regulates its transcriptional activity. Sumoylation at Lys-698 positively regulates its transcriptional activity in the presence of RWDD3. Sumoylation at Lys-277 and Lys-293 is dispensable whereas sumoylation at Lys-698 is critical for the stimulatory effect of RWDD3 on its transcriptional activity. Heat shock increases sumoylation in a RWDD3-dependent manner.

It is found in the cytoplasm. It localises to the nucleus. Its subcellular location is the mitochondrion. The protein localises to the cytoskeleton. The protein resides in the spindle. It is found in the microtubule organizing center. It localises to the centrosome. Its subcellular location is the chromosome. The protein localises to the nucleoplasm. Functionally, receptor for glucocorticoids (GC). Has a dual mode of action: as a transcription factor that binds to glucocorticoid response elements (GRE), both for nuclear and mitochondrial DNA, and as a modulator of other transcription factors. Affects inflammatory responses, cellular proliferation and differentiation in target tissues. Involved in chromatin remodeling. Plays a role in rapid mRNA degradation by binding to the 5' UTR of target mRNAs and interacting with PNRC2 in a ligand-dependent manner which recruits the RNA helicase UPF1 and the mRNA-decapping enzyme DCP1A, leading to RNA decay. Could act as a coactivator for STAT5-dependent transcription upon growth hormone (GH) stimulation and could reveal an essential role of hepatic GR in the control of body growth. Mediates glucocorticoid-induced apoptosis. Promotes accurate chromosome segregation during mitosis. May act as a tumor suppressor. May play a negative role in adipogenesis through the regulation of lipolytic and antilipogenic gene expression. The protein is Glucocorticoid receptor (NR3C1) of Oryctolagus cuniculus (Rabbit).